Consider the following 1105-residue polypeptide: KAT8 regulatory NSL complex subunit 1 (1105 aa).

The residue at position 104 (Lys104) is an N6-acetyllysine. 2 disordered regions span residues 145–211 (GQTA…CTLP) and 225–263 (NNSTANKSSVNSMEQPALQGSSRLSPGTDSSSNLGGVKL). Positions 225–258 (NNSTANKSSVNSMEQPALQGSSRLSPGTDSSSNL) are enriched in polar residues. The residue at position 249 (Ser249) is a Phosphoserine. Residue Lys262 forms a Glycyl lysine isopeptide (Lys-Gly) (interchain with G-Cter in SUMO2) linkage. Phosphoserine is present on Ser268. Residues 283 to 314 (RITALLRRQADIESRARRLQKRLQVVQAKQVE) adopt a coiled-coil conformation. Lys331 participates in a covalent cross-link: Glycyl lysine isopeptide (Lys-Gly) (interchain with G-Cter in SUMO2). 2 disordered regions span residues 399 to 426 (DSDVTDSSSGGESDIEEEELTRADPEQR) and 733 to 857 (TAKL…RRGE). 2 stretches are compositionally biased toward basic and acidic residues: residues 741–753 (TRPDRTHRQHLDD) and 780–804 (DPNHSKMRLRDHSSERSEVLKHHTD). The span at 827 to 850 (STSSDSPAPASSSSQVTASTSQQP) shows a compositional bias: low complexity. The interval 850–882 (PVRRRRGESSFDINNIVIPMSVAATTRVEKLQY) is required for activation of KAT8 histone acetyltransferase activity. The region spanning 884-1035 (EILTPSWREV…GLDEQSVQPW (152 aa)) is the PEHE domain. Residues 910–928 (EDLSDAAFAALHAKCEEME) form an interaction with KAT8 HAT domain region. A disordered region spans residues 938 to 1034 (VPPQRRGSRS…LGLDEQSVQP (97 aa)). Positions 955–965 (TTPQLGSANPS) are enriched in polar residues. The span at 975–988 (SSSHSLSEYSHGQS) shows a compositional bias: low complexity. Phosphoserine occurs at positions 991 and 994. Thr1003 is subject to Phosphothreonine. Residues 1008–1019 (DTPRHLASEDTR) show a composition bias toward basic and acidic residues. Ser1045 carries the post-translational modification Phosphoserine. The segment at 1058–1105 (ERAARCTRRTSGSKTGRETEAAPTSPPIVPLKSRHLVAAATAQRPTHR) is disordered.

In terms of assembly, component of the NSL complex at least composed of MOF/KAT8, KANSL1, KANSL2, KANSL3, MCRS1, PHF20, OGT1/OGT, WDR5 and HCFC1. Interacts (via PEHE domain) with KAT8 (via HAT domain); the interaction is direct. Component of some MLL1/MLL complex, at least composed of the core components KMT2A/MLL1, ASH2L, HCFC1, WDR5 and RBBP5, as well as the facultative components BACC1, CHD8, E2F6, HSP70, INO80C, KANSL1, LAS1L, MAX, MCRS1, MGA, KAT8/MOF, PELP1, PHF20, PRP31, RING2, RUVB1/TIP49A, RUVB2/TIP49B, SENP3, TAF1, TAF4, TAF6, TAF7, TAF9 and TEX10. In terms of tissue distribution, expressed in the brain.

The protein localises to the nucleus. It is found in the chromosome. Its subcellular location is the centromere. The protein resides in the kinetochore. It localises to the mitochondrion. The protein localises to the cytoplasm. It is found in the cytoskeleton. Its subcellular location is the spindle pole. Its function is as follows. Non-catalytic component of the NSL histone acetyltransferase complex, a multiprotein complex that mediates histone H4 acetylation at 'Lys-5'- and 'Lys-8' (H4K5ac and H4K8ac) at transcription start sites and promotes transcription initiation. The NSL complex also acts as a regulator of gene expression in mitochondria. In addition to its role in transcription, KANSL1 also plays an essential role in spindle assembly during mitosis. Associates with microtubule ends and contributes to microtubule stability. The polypeptide is KAT8 regulatory NSL complex subunit 1 (KANSL1) (Homo sapiens (Human)).